The primary structure comprises 236 residues: (5-formylfuran-3-yl)methyl phosphate synthase (236 aa).

Lys27 (schiff-base intermediate with substrate) is an active-site residue. Catalysis depends on Lys85, which acts as the Proton acceptor.

Belongs to the MfnB family.

The enzyme catalyses 2 D-glyceraldehyde 3-phosphate = 4-(hydroxymethyl)-2-furancarboxaldehyde phosphate + phosphate + 2 H2O. It participates in cofactor biosynthesis; methanofuran biosynthesis. Catalyzes the formation of 4-(hydroxymethyl)-2-furancarboxaldehyde phosphate (4-HFC-P) from two molecules of glyceraldehyde-3-P (GA-3-P). The sequence is that of (5-formylfuran-3-yl)methyl phosphate synthase from Methanococcus maripaludis (strain C5 / ATCC BAA-1333).